Reading from the N-terminus, the 152-residue chain is Aspartate 1-decarboxylase (152 aa).

The Schiff-base intermediate with substrate; via pyruvic acid role is filled by S24. Position 24 is a pyruvic acid (Ser) (S24). T56 serves as a coordination point for substrate. Catalysis depends on Y57, which acts as the Proton donor. 72–74 is a substrate binding site; sequence GAA.

It belongs to the PanD family. In terms of assembly, heterooctamer of four alpha and four beta subunits. The cofactor is pyruvate. Is synthesized initially as an inactive proenzyme, which is activated by self-cleavage at a specific serine bond to produce a beta-subunit with a hydroxyl group at its C-terminus and an alpha-subunit with a pyruvoyl group at its N-terminus.

The protein resides in the cytoplasm. It catalyses the reaction L-aspartate + H(+) = beta-alanine + CO2. It functions in the pathway cofactor biosynthesis; (R)-pantothenate biosynthesis; beta-alanine from L-aspartate: step 1/1. In terms of biological role, catalyzes the pyruvoyl-dependent decarboxylation of aspartate to produce beta-alanine. This is Aspartate 1-decarboxylase from Methylobacterium nodulans (strain LMG 21967 / CNCM I-2342 / ORS 2060).